The following is a 147-amino-acid chain: Prefoldin subunit alpha (147 aa).

The protein belongs to the prefoldin alpha subunit family. As to quaternary structure, heterohexamer of two alpha and four beta subunits.

It is found in the cytoplasm. Its function is as follows. Molecular chaperone capable of stabilizing a range of proteins. Seems to fulfill an ATP-independent, HSP70-like function in archaeal de novo protein folding. The polypeptide is Prefoldin subunit alpha (Thermococcus onnurineus (strain NA1)).